A 411-amino-acid chain; its full sequence is Putative ion-transport protein YfeO (411 aa).

The next 11 helical transmembrane spans lie at 9–29, 54–74, 99–119, 149–169, 186–206, 223–243, 258–278, 296–316, 322–342, 343–363, and 386–406; these read MLLLSLPALIIGVASSLVLIA, DSPFWIVGMLTLTGVVVGLII, ALPGLLLALIIGLAGGVSLGP, ILASAGTIGALFGTPVAAALI, LFAPLMAAAAGSLTTSLFFHP, IASGAIVAAIAIAAGMVAVWC, VLILGIGGFILGILGVIGGPL, LGAGDYFTLAVVKLAALVIAA, GGRIFPAVFIGAALGLMLHAH, VEAVPAAITVSCAILGLVLVV, and LLCIVMLPAWLLLAGKPLLAA.

Belongs to the chloride channel (TC 2.A.49) family.

It is found in the cell membrane. The chain is Putative ion-transport protein YfeO from Salmonella choleraesuis (strain SC-B67).